The sequence spans 318 residues: Very-long-chain 3-oxoacyl-CoA reductase-B (318 aa).

Residues 15–35 traverse the membrane as a helical segment; sequence FWYLGVVAATWWGLRAAWCLL. 54–83 lines the NADP(+) pocket; the sequence is GKWAVVTGATDGIGKAYAEELARRGMNIVL. The next 2 membrane-spanning stretches (helical) occupy residues 187 to 207 and 281 to 301; these read GVVL…LTVY and AITG…SMGM. S194 contacts substrate. The Proton acceptor role is filled by Y207.

It belongs to the short-chain dehydrogenases/reductases (SDR) family. 17-beta-HSD 3 subfamily.

It localises to the endoplasmic reticulum membrane. The enzyme catalyses a very-long-chain (3R)-3-hydroxyacyl-CoA + NADP(+) = a very-long-chain 3-oxoacyl-CoA + NADPH + H(+). It catalyses the reaction 17beta-estradiol + NAD(+) = estrone + NADH + H(+). It carries out the reaction 17beta-estradiol + NADP(+) = estrone + NADPH + H(+). Its pathway is lipid metabolism; fatty acid biosynthesis. It participates in steroid biosynthesis; estrogen biosynthesis. Catalyzes the second of the four reactions of the long-chain fatty acids elongation cycle. This endoplasmic reticulum-bound enzymatic process, allows the addition of two carbons to the chain of long- and very long-chain fatty acids/VLCFAs per cycle. This enzyme has a 3-ketoacyl-CoA reductase activity, reducing 3-ketoacyl-CoA to 3-hydroxyacyl-CoA, within each cycle of fatty acid elongation. Thereby, it may participate in the production of VLCFAs of different chain lengths that are involved in multiple biological processes as precursors of membrane lipids and lipid mediators. May also catalyze the transformation of estrone (E1) into estradiol (E2) and play a role in estrogen formation. This chain is Very-long-chain 3-oxoacyl-CoA reductase-B (hsd17b12-b), found in Xenopus laevis (African clawed frog).